We begin with the raw amino-acid sequence, 407 residues long: Succinate--CoA ligase [ADP-forming] subunit beta, hydrogenosomal (407 aa).

Residues 1-9 (MLSSSFARN) constitute a hydrogenosome transit peptide. Residues 18 to 261 (KEICAKYNVA…LKQVNPFEIR (244 aa)) enclose the ATP-grasp domain. ATP-binding positions include lysine 55, 62-64 (GRG), and glutamate 124. The Mg(2+) site is built by asparagine 216 and aspartate 230. Substrate-binding positions include asparagine 281 and 338-340 (GIV).

It belongs to the succinate/malate CoA ligase beta subunit family. Heterodimer of an alpha and a beta subunit. Mg(2+) is required as a cofactor.

The protein resides in the hydrogenosome. It catalyses the reaction succinate + ATP + CoA = succinyl-CoA + ADP + phosphate. Its pathway is carbohydrate metabolism; tricarboxylic acid cycle; succinate from succinyl-CoA (ligase route): step 1/1. Its function is as follows. Succinyl-CoA synthetase functions in the citric acid cycle (TCA), coupling the hydrolysis of succinyl-CoA to the synthesis of ATP and thus represents the only step of substrate-level phosphorylation in the TCA. The beta subunit provides nucleotide specificity of the enzyme and binds the substrate succinate, while the binding sites for coenzyme A and phosphate are found in the alpha subunit. The protein is Succinate--CoA ligase [ADP-forming] subunit beta, hydrogenosomal of Trichomonas vaginalis.